The primary structure comprises 129 residues: Small ribosomal subunit protein uS12 (129 aa).

Asp-89 is subject to 3-methylthioaspartic acid.

This sequence belongs to the universal ribosomal protein uS12 family. Part of the 30S ribosomal subunit. Contacts proteins S8 and S17. May interact with IF1 in the 30S initiation complex.

With S4 and S5 plays an important role in translational accuracy. In terms of biological role, interacts with and stabilizes bases of the 16S rRNA that are involved in tRNA selection in the A site and with the mRNA backbone. Located at the interface of the 30S and 50S subunits, it traverses the body of the 30S subunit contacting proteins on the other side and probably holding the rRNA structure together. The combined cluster of proteins S8, S12 and S17 appears to hold together the shoulder and platform of the 30S subunit. This chain is Small ribosomal subunit protein uS12, found in Rickettsia akari (strain Hartford).